Here is an 860-residue protein sequence, read N- to C-terminus: Alanine--tRNA ligase (860 aa).

Zn(2+) is bound by residues histidine 563, histidine 567, cysteine 665, and histidine 669.

It belongs to the class-II aminoacyl-tRNA synthetase family. Zn(2+) is required as a cofactor.

The protein localises to the cytoplasm. The catalysed reaction is tRNA(Ala) + L-alanine + ATP = L-alanyl-tRNA(Ala) + AMP + diphosphate. Catalyzes the attachment of alanine to tRNA(Ala) in a two-step reaction: alanine is first activated by ATP to form Ala-AMP and then transferred to the acceptor end of tRNA(Ala). Also edits incorrectly charged Ser-tRNA(Ala) and Gly-tRNA(Ala) via its editing domain. The polypeptide is Alanine--tRNA ligase (Vibrio cholerae serotype O1 (strain ATCC 39541 / Classical Ogawa 395 / O395)).